The following is a 150-amino-acid chain: Large ribosomal subunit protein bL9 (150 aa).

It belongs to the bacterial ribosomal protein bL9 family.

Binds to the 23S rRNA. The protein is Large ribosomal subunit protein bL9 of Shewanella sp. (strain MR-4).